A 177-amino-acid polypeptide reads, in one-letter code: Adenine phosphoribosyltransferase (177 aa).

Belongs to the purine/pyrimidine phosphoribosyltransferase family. Homodimer.

The protein resides in the cytoplasm. It carries out the reaction AMP + diphosphate = 5-phospho-alpha-D-ribose 1-diphosphate + adenine. It participates in purine metabolism; AMP biosynthesis via salvage pathway; AMP from adenine: step 1/1. Catalyzes a salvage reaction resulting in the formation of AMP, that is energically less costly than de novo synthesis. In Leuconostoc citreum (strain KM20), this protein is Adenine phosphoribosyltransferase.